The sequence spans 337 residues: 5-formaminoimidazole-4-carboxamide-1-(beta)-D-ribofuranosyl 5'-monophosphate synthetase (337 aa).

5-amino-1-(5-phospho-beta-D-ribosyl)imidazole-4-carboxamide is bound by residues H9 and S73. The region spanning 94–324 is the ATP-grasp domain; sequence KKIFEWEADQ…IGRRIAREIR (231 aa). ATP contacts are provided by residues 124–184 and E206; that span reads PEDV…VPMY. N234 is a binding site for 5-amino-1-(5-phospho-beta-D-ribosyl)imidazole-4-carboxamide. Residues E273 and E286 each coordinate Mg(2+).

It belongs to the phosphohexose mutase family. It depends on Mg(2+) as a cofactor. Requires Mn(2+) as cofactor.

It carries out the reaction 5-amino-1-(5-phospho-beta-D-ribosyl)imidazole-4-carboxamide + formate + ATP = 5-formamido-1-(5-phospho-D-ribosyl)imidazole-4-carboxamide + ADP + phosphate. The protein operates within purine metabolism; IMP biosynthesis via de novo pathway; 5-formamido-1-(5-phospho-D-ribosyl)imidazole-4-carboxamide from 5-amino-1-(5-phospho-D-ribosyl)imidazole-4-carboxamide (formate route): step 1/1. Catalyzes the ATP- and formate-dependent formylation of 5-aminoimidazole-4-carboxamide-1-beta-d-ribofuranosyl 5'-monophosphate (AICAR) to 5-formaminoimidazole-4-carboxamide-1-beta-d-ribofuranosyl 5'-monophosphate (FAICAR) in the absence of folates. In Saccharolobus solfataricus (strain ATCC 35092 / DSM 1617 / JCM 11322 / P2) (Sulfolobus solfataricus), this protein is 5-formaminoimidazole-4-carboxamide-1-(beta)-D-ribofuranosyl 5'-monophosphate synthetase.